The sequence spans 800 residues: Elongation factor G, mitochondrial (800 aa).

The N-terminal 34 residues, 1–34 (MSVHTVMRTQVRSLAGMPKAAMRPLGNSFCARRY), are a transit peptide targeting the mitochondrion. In terms of domain architecture, tr-type G spans 99 to 385 (SKVRNIGIAA…GICDYLPNPA (287 aa)). GTP-binding positions include 108 to 115 (AHIDSGKT), 183 to 187 (DTPGH), and 237 to 240 (NKMD).

Belongs to the TRAFAC class translation factor GTPase superfamily. Classic translation factor GTPase family. EF-G/EF-2 subfamily.

The protein resides in the mitochondrion. It functions in the pathway protein biosynthesis; polypeptide chain elongation. Functionally, mitochondrial GTPase that catalyzes the GTP-dependent ribosomal translocation step during translation elongation. During this step, the ribosome changes from the pre-translocational (PRE) to the post-translocational (POST) state as the newly formed A-site-bound peptidyl-tRNA and P-site-bound deacylated tRNA move to the P and E sites, respectively. Catalyzes the coordinated movement of the two tRNA molecules, the mRNA and conformational changes in the ribosome. The sequence is that of Elongation factor G, mitochondrial from Coccidioides immitis (strain RS) (Valley fever fungus).